Here is a 132-residue protein sequence, read N- to C-terminus: Monothiol glutaredoxin-S9 (132 aa).

The interval 16–38 is disordered; it reads ASRPATAAAAPPPPPPRGEEEEV. The Glutaredoxin domain maps to 35 to 131; sequence EEEVRRAVAE…PILKEAGALW (97 aa). [2Fe-2S] cluster is bound at residue Cys-55. Positions 129–132 match the Responsive for interaction with TGA factors motif; it reads ALWL.

Belongs to the glutaredoxin family. CC-type subfamily.

It is found in the cytoplasm. The protein localises to the nucleus. Its function is as follows. May only reduce GSH-thiol disulfides, but not protein disulfides. The polypeptide is Monothiol glutaredoxin-S9 (GRXS9) (Oryza sativa subsp. japonica (Rice)).